Reading from the N-terminus, the 213-residue chain is Motile sperm domain-containing protein 1 (213 aa).

The region spanning Pro16–Phe143 is the MSP domain. The next 2 membrane-spanning stretches (helical) occupy residues Ser159–Gly179 and Leu191–Leu211. A Nuclear export signal motif is present at residues Leu205 to Met208.

The protein localises to the endoplasmic reticulum membrane. It localises to the golgi apparatus membrane. Functionally, plays a role in differentiation and/or proliferation of mesenchymal stem cells. Proposed to be involved in epithelial-to-mesenchymal transition (EMT). However, another study suggests that it is not required for EMT or stem cell self-renewal and acts during later stages of differentiation. This is Motile sperm domain-containing protein 1 (MOSPD1) from Homo sapiens (Human).